The chain runs to 583 residues: Inactive carboxylesterase-like protein VdtD (583 aa).

Residues 1-23 (MFMTQIVFGIAPTLLKTFSHLTA) form the signal peptide. 9 N-linked (GlcNAc...) asparagine glycosylation sites follow: Asn84, Asn109, Asn221, Asn265, Asn307, Asn350, Asn388, Asn448, and Asn468.

Belongs to the type-B carboxylesterase/lipase family.

Its pathway is secondary metabolite biosynthesis. In terms of biological role, inactive carboxylesterase-like protein; part of the gene cluster that mediates the biosynthesis of viriditoxin, one of the 'classical' secondary metabolites produced by fungi and that has antibacterial activity. The first step is performed by the polyketide synthase VdtA which condenses one acetyl-CoA and 6 malonyl-CoA units to form the heptaketide monomer backbone of viriditoxin. The product of VdtA is then O-methylated on C7 by the O-methyltransferase VdtC. The O-methyl group is important for the stereoselective coupling of the monomers at the final step of viriditoxin biosynthesis. The short-chain dehydrogenase/reductase VdtF then acts as a stereospecific reductase converting the pyrone to dihydropyrone via the reduction of the C3-C4 double bond. The FAD-binding monooxygenase VdtE then converts the ketone group into a methyl-ester group to yield semi-viriditoxin. Finally, the laccase VdtB is involved in dimerization of 2 semi-viriditoxin molecules to yield the final viriditoxin. VdtB is responsible for the regioselective 6,6'-coupling of semi-viriditoxin, which yields (M)-viriditoxin and (P)-viriditoxin at a ratio of 1:2. The non-catalytic carboxylesterase-like protein VdtD affects the stereochemistical outcome of the coupling. The highly reducing polyketide synthase VdtX is not involved in viriditoxin synthesis, but might possibly play a role in the production of additional metabolites not identified yet. The polypeptide is Inactive carboxylesterase-like protein VdtD (Byssochlamys spectabilis (Paecilomyces variotii)).